A 255-amino-acid polypeptide reads, in one-letter code: Small ribosomal subunit protein uS2 (255 aa).

It belongs to the universal ribosomal protein uS2 family.

The sequence is that of Small ribosomal subunit protein uS2 from Streptococcus uberis (strain ATCC BAA-854 / 0140J).